Here is a 281-residue protein sequence, read N- to C-terminus: Polyamine aminopropyltransferase (281 aa).

The 235-residue stretch at 2-236 (DLWLKEGQIS…GYWSFTIGSK (235 aa)) folds into the PABS domain. Gln31 is an S-methyl-5'-thioadenosine binding site. Spermidine-binding residues include His62 and Asp86. S-methyl-5'-thioadenosine-binding positions include Glu106 and 138–139 (DG). Asp156 acts as the Proton acceptor in catalysis. 156–159 (DSTD) is a spermidine binding site.

Belongs to the spermidine/spermine synthase family. Homodimer or homotetramer.

It is found in the cytoplasm. It catalyses the reaction S-adenosyl 3-(methylsulfanyl)propylamine + putrescine = S-methyl-5'-thioadenosine + spermidine + H(+). It functions in the pathway amine and polyamine biosynthesis; spermidine biosynthesis; spermidine from putrescine: step 1/1. Catalyzes the irreversible transfer of a propylamine group from the amino donor S-adenosylmethioninamine (decarboxy-AdoMet) to putrescine (1,4-diaminobutane) to yield spermidine. The sequence is that of Polyamine aminopropyltransferase from Clostridium tetani (strain Massachusetts / E88).